Reading from the N-terminus, the 115-residue chain is UPF0738 protein SE_0694 (115 aa).

This sequence belongs to the UPF0738 family.

The chain is UPF0738 protein SE_0694 from Staphylococcus epidermidis (strain ATCC 12228 / FDA PCI 1200).